The sequence spans 354 residues: Adenine deaminase (354 aa).

Positions 19, 21, and 211 each coordinate Zn(2+). The Proton donor role is filled by Glu214. Asp291 contacts Zn(2+). Asp292 serves as a coordination point for substrate.

It belongs to the metallo-dependent hydrolases superfamily. Adenosine and AMP deaminases family. Adenine deaminase type 2 subfamily. It depends on Zn(2+) as a cofactor.

It localises to the cytoplasm. Its subcellular location is the nucleus. It carries out the reaction adenine + H2O + H(+) = hypoxanthine + NH4(+). Its function is as follows. Catalyzes the hydrolytic deamination of adenine to hypoxanthine. Plays an important role in the purine salvage pathway and in nitrogen catabolism. The sequence is that of Adenine deaminase (aah1) from Aspergillus fumigatus (strain ATCC MYA-4609 / CBS 101355 / FGSC A1100 / Af293) (Neosartorya fumigata).